The primary structure comprises 179 residues: Shikimate kinase (179 aa).

11–16 contributes to the ATP binding site; that stretch reads GAGKTT. Mg(2+) is bound at residue T15. Residues D33, R57, and G79 each coordinate substrate. An ATP-binding site is contributed by R118. R140 contacts substrate.

The protein belongs to the shikimate kinase family. In terms of assembly, monomer. Mg(2+) serves as cofactor.

It localises to the cytoplasm. The catalysed reaction is shikimate + ATP = 3-phosphoshikimate + ADP + H(+). It functions in the pathway metabolic intermediate biosynthesis; chorismate biosynthesis; chorismate from D-erythrose 4-phosphate and phosphoenolpyruvate: step 5/7. Its function is as follows. Catalyzes the specific phosphorylation of the 3-hydroxyl group of shikimic acid using ATP as a cosubstrate. This is Shikimate kinase from Bacteroides fragilis (strain ATCC 25285 / DSM 2151 / CCUG 4856 / JCM 11019 / LMG 10263 / NCTC 9343 / Onslow / VPI 2553 / EN-2).